Reading from the N-terminus, the 86-residue chain is Chymotrypsin inhibitor (86 aa).

Positions 1–22 are cleaved as a signal peptide; the sequence is MKLLFAIVALLALAFLCADISA.

It belongs to the protease inhibitor I13 (potato type I serine protease inhibitor) family. Monomer. Expressed in the body wall, coelomocytes and at a lower level in intestine.

The protein localises to the secreted. In terms of biological role, inhibits L.terrestris digestive chymotrypsin LT_CH 1 and bovine alpha-chymotrypsin. The chain is Chymotrypsin inhibitor from Lumbricus terrestris (Common earthworm).